The following is an 801-amino-acid chain: H(+)/Cl(-) exchange transporter 3 (801 aa).

The Cytoplasmic segment spans residues 1-125; sequence MESEQLFHRG…WEMTKSLYDA (125 aa). 3 consecutive short sequence motifs (di-leucine internalization motif; mediates targeting to late endosome and lysosome membranes) follow at residues 28–29, 46–47, and 71–75; these read LL and LLDLL. The helical transmembrane segment at 126 to 163 threads the bilayer; sequence WSGWLVVTLTGLASGALAGLIDIAADWMTDLKEGICLS. N177 carries an N-linked (GlcNAc...) asparagine glycan. Residues 209–232 form a helical membrane-spanning segment; the sequence is MNYIMYIFWALSFAFLAVSLVKVF. The Selectivity filter part_1 motif lies at 238 to 242; the sequence is GSGIP. S239 serves as a coordination point for chloride. The helical intramembrane region spans 241–248; the sequence is IPEIKTIL. Transmembrane regions (helical) follow at residues 258 to 276 and 282 to 301; these read GKWT…VASG and EGPL…YLFP. The Selectivity filter part_2 signature appears at 280 to 284; sequence GKEGP. Intramembrane regions (helical) lie at residues 313–325 and 329–337; these read VLSA…VSVA and PIGGVLFSL. Transmembrane regions (helical) follow at residues 349–367, 391–416, and 423–443; these read LWRS…RSIN, FPFI…AWCR, and FGKY…VIAF. N451 and N479 each carry an N-linked (GlcNAc...) asparagine glycan. A helical transmembrane segment spans residues 500–520; sequence IWQLCLALIFKIIMTVFTFGI. Positions 525 to 529 match the Selectivity filter part_3 motif; it reads GLFIP. A chloride-binding site is contributed by F527. 2 consecutive intramembrane regions (helical) follow at residues 555-569 and 573-584; these read GLYA…LGGV and TVSLVVIVFELT. The segment at residues 585–588 is an intramembrane region (note=Loop between two helices); the sequence is GGLE. A helical membrane pass occupies residues 589–607; that stretch reads YIVPLMAAVMTSKWVGDAF. Topologically, residues 608–801 are cytoplasmic; that stretch reads GREGIYEAHI…NQDPASIMFN (194 aa). Y613 contacts chloride. 2 CBS domains span residues 641–705 and 738–795; these read MRPR…ARKK and LDMS…NQDP. ATP is bound by residues 672–674 and 779–782; these read YNG and TKKD.

The protein belongs to the chloride channel (TC 2.A.49) family. ClC-3/CLCN3 subfamily. In terms of assembly, monomer and homodimer. Forms heterodimers with CLCN4. In terms of processing, N-glycosylated.

It localises to the early endosome membrane. The protein resides in the late endosome membrane. Its subcellular location is the lysosome membrane. It is found in the cell membrane. Strongly outwardly rectifying, electrogenic H(+)/Cl(-)exchanger which mediates the exchange of chloride ions against protons. The CLC channel family contains both chloride channels and proton-coupled anion transporters that exchange chloride or another anion for protons. The presence of conserved gating glutamate residues is typical for family members that function as antiporters. This Pongo abelii (Sumatran orangutan) protein is H(+)/Cl(-) exchange transporter 3 (CLCN3).